Here is a 295-residue protein sequence, read N- to C-terminus: Protoheme IX farnesyltransferase (295 aa).

9 helical membrane passes run 30-50 (LVVLTGVTGIIIAPGNIHPLI), 51-71 (AVISTLCIALGSGAAGAINMW), 93-115 (ISRSSALEVGLVLSFISVTIMMI), 119-136 (YISGILLAISIGFYIYVY), 148-168 (IVIGGAAGALPPIIGWTSVTG), 175-195 (LVLFLIIFMWTPPHFWALSLL), 219-239 (IHILVYSILLFPITLLPGLFL), 244-264 (LYEITAIPLGLMFVVQAFQVF), and 275-295 (MFTYSIIYLFILFTCIMLSSF).

Belongs to the UbiA prenyltransferase family. Protoheme IX farnesyltransferase subfamily.

It localises to the cell inner membrane. It carries out the reaction heme b + (2E,6E)-farnesyl diphosphate + H2O = Fe(II)-heme o + diphosphate. It participates in porphyrin-containing compound metabolism; heme O biosynthesis; heme O from protoheme: step 1/1. Converts heme B (protoheme IX) to heme O by substitution of the vinyl group on carbon 2 of heme B porphyrin ring with a hydroxyethyl farnesyl side group. This is Protoheme IX farnesyltransferase from Ehrlichia ruminantium (strain Welgevonden).